Reading from the N-terminus, the 369-residue chain is Putative 2-aminoethylphosphonate import ATP-binding protein PhnT (369 aa).

The ABC transporter domain occupies 19-250 (IVLDSLRVAY…PPNRFAAEFL (232 aa)). 51-58 (GPSGSGKT) provides a ligand contact to ATP.

The protein belongs to the ABC transporter superfamily. 2-aminoethylphosphonate importer (TC 3.A.1.11.5) family.

It localises to the cell inner membrane. In terms of biological role, probably part of the PhnSTUV complex (TC 3.A.1.11.5) involved in 2-aminoethylphosphonate import. Probably responsible for energy coupling to the transport system. The protein is Putative 2-aminoethylphosphonate import ATP-binding protein PhnT (phnT) of Salmonella typhimurium (strain LT2 / SGSC1412 / ATCC 700720).